A 404-amino-acid chain; its full sequence is MKLPIYLDYSATCPVDPRAAEKMMQCLTLDGNFGNPASRSHRFGWQAEEAVDEARNHVADLIGADPREIVFTSGATESNNLAIKGAAHFYVKQGKHIITCKTEHKAVLDTCRHLESEGYEVTYLDPQSDGLLTLPQIEAAMRPDTILVSIMHVNNEIGVIQDLAAIGELCRARKILFHVDAAQSAGKVEIDVDAMKIDLLSLSAHKVYGPKGIGALYVRRKPRVRLEAQMHGGGHERGMRSGTLPTHQIVGMGEAFRIAKAEMAEENVRIKALRDRLYDGLKDIEQVFVNGSTEHRVAGNLNISFAYVEGESLMMALKDLAVSSGSACTSASLEPSYVLRALGLNDELAHSSIRFSIGRFTTAEEIDYAIGLIRDSIGKLRDLSPLWDMYKEGIDLSKVEWVSH.

Pyridoxal 5'-phosphate contacts are provided by residues 75 to 76, Asn-155, Gln-183, and 203 to 205; these read AT and SAH. Lys-206 bears the N6-(pyridoxal phosphate)lysine mark. Residue Thr-243 coordinates pyridoxal 5'-phosphate. Cys-328 (cysteine persulfide intermediate) is an active-site residue. Cys-328 is a [2Fe-2S] cluster binding site.

This sequence belongs to the class-V pyridoxal-phosphate-dependent aminotransferase family. NifS/IscS subfamily. Homodimer. Forms a heterotetramer with IscU, interacts with other sulfur acceptors. The cofactor is pyridoxal 5'-phosphate.

The protein localises to the cytoplasm. It carries out the reaction (sulfur carrier)-H + L-cysteine = (sulfur carrier)-SH + L-alanine. It functions in the pathway cofactor biosynthesis; iron-sulfur cluster biosynthesis. Its function is as follows. Master enzyme that delivers sulfur to a number of partners involved in Fe-S cluster assembly, tRNA modification or cofactor biosynthesis. Catalyzes the removal of elemental sulfur atoms from cysteine to produce alanine. Functions as a sulfur delivery protein for Fe-S cluster synthesis onto IscU, an Fe-S scaffold assembly protein, as well as other S acceptor proteins. This is Cysteine desulfurase IscS from Tolumonas auensis (strain DSM 9187 / NBRC 110442 / TA 4).